The primary structure comprises 527 residues: MEPTEKLCKKMQGQEAGDKPRTAALETEGPLQDSALPIQDDQDKQSSLPRASLGKRPLSKTSEELMDAGTCRVHKAPTAAACGPQSEEEGCSPPERKAESLKPSISAVPGQATAGSLNSHEGDLKKESLEVTCQFRKKTRTLYRSDQLEELERIFQEDHYPDSDKRHEISQMVGVTPQRIMVWFQNRRAKWRKVEKLNEKETKNGPAAPSADSSQHRSAPELLDPMPTDLEPGPVPPENILDVFPEPPMLLTSEQTLTPFQNNEGAERVAVTPPLLSPPPIRRANLPLPLGPVQTPQVLPPMRDVPGSDSIYKDKAYVSWGTSIASPPTYSNLEDLGSQDYQASSQLGSFQLSQAPHLPLFPSLQSQFPYLPPFPYPIPSSMPFLPPEDSLFSFPFGFSGDSSQDYCPGPPPGQILLQPPAENMGTGPWSGHCLPEPPFPRPHYPQALGQPLGAEGYFPNLLPTPYALTMSKQSSLGLNGLLEGTRVETGSSLSKMSDEQTSSSLEQPALEEVRDKNKNSHAAGAKE.

4 disordered regions span residues 1–126 (MEPT…DLKK), 194–245 (VEKL…DVFP), 271–306 (VTPP…RDVP), and 488–527 (ETGS…GAKE). The segment at residues 136 to 195 (RKKTRTLYRSDQLEELERIFQEDHYPDSDKRHEISQMVGVTPQRIMVWFQNRRAKWRKVE) is a DNA-binding region (homeobox). The segment covering 194–203 (VEKLNEKETK) has biased composition (basic and acidic residues). Residues 488–506 (ETGSSLSKMSDEQTSSSLE) show a composition bias toward polar residues. Positions 511-527 (EEVRDKNKNSHAAGAKE) are enriched in basic and acidic residues.

Specifically expressed in ovaries and testes. In ovaries, expressed in oocytes from primordial through antral follicles but not in granulosa cells, theca cells and corpora lutea.

It localises to the nucleus. Transcription factor which plays an essential role in postnatal follicle development. Binds preferentially to the DNA sequences 5'-TAATTG-3', 5'-TAGTTG-3' and 5'-TAATTA-3'. Directly regulates the transcription of POU5F1 and GDF9 during early folliculogenesis. This Mus musculus (Mouse) protein is Homeobox protein NOBOX (Nobox).